We begin with the raw amino-acid sequence, 470 residues long: MAEFPFEISPMFEGERVRKEGMFVELGGPKSLGLELVRAKPMDEIEDDKVTIVGPDLKEMEEGKTYPWAMIFNIGGELVEPDLESVVERRVHDFINYCQGIMHLNQRYDVWMRVSKDTAAKMDSFEPFGQAVMMLFKTELPFIEKMQVTFYTEQAEVEKQLEEAKAIFKARDERTKDLHDEDVDVFYGCTLCQSFAPTNVCVVSPDRVSLCGAINWFDGRAAAKVDPEGPQFEITKGDLIDAEKGEYTGVNDIAKKLSAGEFDKIKLHSFFDAPHTSCGCFEVVGFYIPEVDGIGWVNREYQGMAPNGIGFSTMAGQTGGGKQIVGFLGIGINYFYSPKFIQADGGWNRVVWLPSMLKDKIAETIPEDLKDKIATENDATDIESLKAFLQEKGHPVVATWAAAEEEEEEEEEEEEEVAVAAAPMMMPAAGFQMPAMPMMSGGSSGGIKLTFKNAKITIDKMIISEKKEKK.

[Ni-Fe-S] cluster is bound by residues Cys-189, Cys-192, Cys-278, and Cys-280.

The protein belongs to the CdhC family. In terms of assembly, monomer. The ACDS complex is made up of alpha, epsilon, beta, gamma and delta chains with a probable stoichiometry of (alpha(2)epsilon(2))(4)-beta(8)-(gamma(1)delta(1))(8) (Potential). It depends on [Ni-Fe-S] cluster as a cofactor.

The enzyme catalyses Co(I)-[corrinoid Fe-S protein] + acetyl-CoA + H(+) = methyl-Co(III)-[corrinoid Fe-S protein] + CO + CoA. The protein operates within one-carbon metabolism; methanogenesis from acetate. In terms of biological role, part of a complex that catalyzes the reversible cleavage of acetyl-CoA, allowing growth on acetate as sole source of carbon and energy. The alpha-epsilon complex generates CO from CO(2), while the beta subunit (this protein) combines the CO with CoA and a methyl group to form acetyl-CoA. The methyl group, which is incorporated into acetyl-CoA, is transferred to the beta subunit by a corrinoid iron-sulfur protein (the gamma-delta complex). In Methanosarcina acetivorans (strain ATCC 35395 / DSM 2834 / JCM 12185 / C2A), this protein is Acetyl-CoA decarbonylase/synthase complex subunit beta 2 (cdhC2).